We begin with the raw amino-acid sequence, 110 residues long: UPF0235 protein Mpop_2087 (110 aa).

This sequence belongs to the UPF0235 family.

This Methylorubrum populi (strain ATCC BAA-705 / NCIMB 13946 / BJ001) (Methylobacterium populi) protein is UPF0235 protein Mpop_2087.